A 453-amino-acid polypeptide reads, in one-letter code: Chromosomal replication initiator protein DnaA (453 aa).

Positions 1 to 76 (MSGDAAALWP…LAWRQQLPAV (76 aa)) are domain I, interacts with DnaA modulators. Positions 76-115 (VRSVSVRGGVAATERAATLASVPLPTFDAPAAPAANPALL) are domain II. The tract at residues 116 to 333 (GFDPRLSFDR…GALNKLLAYA (218 aa)) is domain III, AAA+ region. Residues Gly-160, Gly-162, Lys-163, and Thr-164 each coordinate ATP. The tract at residues 334 to 453 (ALTGARIDLM…IAAIRRSLNS (120 aa)) is domain IV, binds dsDNA.

Belongs to the DnaA family. As to quaternary structure, oligomerizes as a right-handed, spiral filament on DNA at oriC.

The protein localises to the cytoplasm. Plays an essential role in the initiation and regulation of chromosomal replication. ATP-DnaA binds to the origin of replication (oriC) to initiate formation of the DNA replication initiation complex once per cell cycle. Binds the DnaA box (a 9 base pair repeat at the origin) and separates the double-stranded (ds)DNA. Forms a right-handed helical filament on oriC DNA; dsDNA binds to the exterior of the filament while single-stranded (ss)DNA is stabiized in the filament's interior. The ATP-DnaA-oriC complex binds and stabilizes one strand of the AT-rich DNA unwinding element (DUE), permitting loading of DNA polymerase. After initiation quickly degrades to an ADP-DnaA complex that is not apt for DNA replication. Binds acidic phospholipids. This Sphingopyxis alaskensis (strain DSM 13593 / LMG 18877 / RB2256) (Sphingomonas alaskensis) protein is Chromosomal replication initiator protein DnaA.